A 237-amino-acid chain; its full sequence is Histone H1E (237 aa).

Low complexity predominate over residues 1 to 21 (MSDPAQEVEAPVEAAPVASSP). Disordered regions lie at residues 1–56 (MSDP…PVSE) and 109–237 (LQAK…KKAK). Over residues 26-42 (EKAPKAPKAEKPKSDKP) the composition is skewed to basic and acidic residues. The H15 domain maps to 50–124 (THPPVSEMVV…GASGSFKLPP (75 aa)). The segment covering 182–195 (AKPAAKKAAAPKPK) has biased composition (low complexity). A compositionally biased stretch (basic and acidic residues) spans 200–209 (PKKEVKPKKE). Residues 210 to 237 (AKPKKAAAKPAKKPAAKPAKKPAAKKAK) show a composition bias toward basic residues.

Belongs to the histone H1/H5 family.

The protein resides in the nucleus. It localises to the chromosome. Functionally, histones H1 are necessary for the condensation of nucleosome chains into higher-order structures. The polypeptide is Histone H1E (Chironomus tentans (Midge)).